We begin with the raw amino-acid sequence, 1180 residues long: RecBCD enzyme subunit RecB (1180 aa).

The UvrD-like helicase ATP-binding domain maps to 2–450 (SDVAETLDPL…YTLDTNWRSA (449 aa)). An ATPase, DNA-binding and helicase activity, interacts with RecC region spans residues 2 to 853 (SDVAETLDPL…KGEPQDAAGL (852 aa)). 23 to 30 (ASAGTGKT) contributes to the ATP binding site. A DNA-binding region spans residues 252–254 (IDR). Residue Trp-447 participates in ATP binding. One can recognise a UvrD-like helicase C-terminal domain in the interval 480-746 (SAGKNQALRF…QIVTIHKSKG (267 aa)). 3 consecutive DNA-binding regions follow at residues 511–512 (VG), 560–561 (SR), and Arg-761. The tract at residues 900–1180 (NWRVTSYSGL…MFAGMTLEEA (281 aa)) is nuclease activity, interacts with RecD and RecA. Mg(2+)-binding residues include His-956, Asp-1067, Asp-1080, and Tyr-1081. Asp-1080 functions as the For nuclease activity in the catalytic mechanism.

This sequence belongs to the helicase family. UvrD subfamily. As to quaternary structure, heterotrimer of RecB, RecC and RecD. All subunits contribute to DNA-binding. The C-terminus interacts with RecA. Interacts with YgbT (Cas1). In terms of assembly, (Microbial infection) Lambda virus GamS protein interacts with the enzyme without displacing any of the subunits. The cofactor is Mg(2+).

It catalyses the reaction Exonucleolytic cleavage (in the presence of ATP) in either 5'- to 3'- or 3'- to 5'-direction to yield 5'-phosphooligonucleotides.. The catalysed reaction is Couples ATP hydrolysis with the unwinding of duplex DNA by translocating in the 3'-5' direction.. It carries out the reaction ATP + H2O = ADP + phosphate + H(+). With respect to regulation, after reacting with DNA bearing a Chi site the holoenzyme is disassembled and loses exonuclease activity, DNA unwinding and Chi-directed DNA cleavage; RecB remains complexed with ssDNA, which may prevent holoenzyme reassembly. High levels of Mg(2+) (13 mM MgCl(2+)) or incubation with DNase allows holoenzyme reassembly, suggesting it is DNA bound to RecB that prevents reassembly. (Microbial infection) RecBCD is inhibited by the lambda virus gam protein (both GamL and GamS isoforms); in vitro a short preincubation prior to adding DNA results in maximal inhibition. A helicase/nuclease that prepares dsDNA breaks (DSB) for recombinational DNA repair. Binds to DSBs and unwinds DNA via a rapid (&gt;1 kb/second) and highly processive (&gt;30 kb) ATP-dependent bidirectional helicase. Unwinds dsDNA until it encounters a Chi (crossover hotspot instigator, 5'-GCTGGTGG-3') sequence from the 3' direction. Cuts ssDNA a few nucleotides 3' to Chi site, by nicking one strand or switching the strand degraded (depending on the reaction conditions). The properties and activities of the enzyme are changed at Chi. The Chi-altered holoenzyme produces a long 3'-ssDNA overhang which facilitates RecA-binding to the ssDNA for homologous DNA recombination and repair. Holoenzyme degrades any linearized DNA that is unable to undergo homologous recombination. In the holoenzyme this subunit contributes ATPase, 3'-5' helicase, exonuclease activity and loads RecA onto ssDNA. The RecBC complex requires the RecD subunit for nuclease activity, but can translocate along ssDNA in both directions. The RecBCD complex does not unwind G-quadruplex DNA. Probably interacts with a component of retron Ec48 which moniters RecBCD stability; when RecB is missing or impaired the retron is activated and becomes toxic. This is RecBCD enzyme subunit RecB from Escherichia coli (strain K12).